A 661-amino-acid polypeptide reads, in one-letter code: Cyclic di-GMP phosphodiesterase PdeR (661 aa).

Residues 109 to 179 enclose the PAS domain; that stretch reads GLSFAEQVVS…RRNNRVFFRS (71 aa). Residues 265–397 form the GGDEF domain; sequence NKVGVVYLDL…GRGQFCVFTP (133 aa). The EAL domain maps to 406–658; that stretch reads YLWLDTNLRK…AFERWYKRYL (253 aa).

As to quaternary structure, interacts with DgcM and MlrA.

It catalyses the reaction 3',3'-c-di-GMP + H2O = 5'-phosphoguanylyl(3'-&gt;5')guanosine + H(+). Functionally, part of a signaling cascade that regulates curli biosynthesis. The cascade is composed of two cyclic-di-GMP (c-di-GMP) control modules, in which c-di-GMP controlled by the DgcE/PdeH pair (module I) regulates the activity of the DgcM/PdeR pair (module II), which in turn regulates activity of the transcription factor MlrA and expression of the master biofilm regulator csgD. PdeR acts as a trigger enzyme that connects modules I and II. It inhibits DgcM and MlrA by direct interaction. Inhibition is relieved when PdeR binds and degrades c-di-GMP generated by module I. The protein is Cyclic di-GMP phosphodiesterase PdeR of Escherichia coli (strain K12).